Consider the following 298-residue polypeptide: ATP synthase gamma chain (298 aa).

It belongs to the ATPase gamma chain family. F-type ATPases have 2 components, CF(1) - the catalytic core - and CF(0) - the membrane proton channel. CF(1) has five subunits: alpha(3), beta(3), gamma(1), delta(1), epsilon(1). CF(0) has three main subunits: a, b and c.

It localises to the cell inner membrane. In terms of biological role, produces ATP from ADP in the presence of a proton gradient across the membrane. The gamma chain is believed to be important in regulating ATPase activity and the flow of protons through the CF(0) complex. In Francisella tularensis subsp. holarctica (strain FTNF002-00 / FTA), this protein is ATP synthase gamma chain.